A 304-amino-acid polypeptide reads, in one-letter code: Cell surface-binding protein OPG105 (304 aa).

One can recognise an Alpha-carbonic anhydrase domain in the interval 1-235; sequence MPQQLSPINI…NDDTQVYYSG (235 aa). Over 1–275 the chain is Virion surface; the sequence is MPQQLSPINI…YQKYIEGNKT (275 aa). Residues 276-294 form a helical membrane-spanning segment; the sequence is FAIIAIVFVFILTAILFFM. The Intravirion segment spans residues 295–304; sequence SQRYSREKQN.

The protein belongs to the alpha-carbonic anhydrase family. As to quaternary structure, homodimer; disulfide-linked. Apparently non-glycosylated.

The protein localises to the virion membrane. Functionally, binds to chondroitin sulfate on the cell surface to provide virion attachment to target cell. In Vaccinia virus (strain Ankara) (VACV), this protein is Cell surface-binding protein OPG105 (OPG105).